We begin with the raw amino-acid sequence, 369 residues long: Delta(12)-oleate desaturase (369 aa).

A run of 2 helical transmembrane segments spans residues Leu-41 to Leu-61 and Ile-69 to Ala-89. The short motif at His-90–His-94 is the Histidine box-1 element. A helical transmembrane segment spans residues Leu-102 to Trp-122. Positions His-126 to His-130 match the Histidine box-2 motif. A run of 3 helical transmembrane segments spans residues Leu-164–Ser-184, Trp-207–Ile-227, and Phe-234–Ile-254. Positions His-300–His-304 match the Histidine box-3 motif.

This sequence belongs to the fatty acid desaturase type 1 family.

It is found in the membrane. The protein operates within lipid metabolism; polyunsaturated fatty acid biosynthesis. Delta(12)-fatty acid desaturase producing in a heterologous system linoleic acid (18:2(9Z,12Z)) and to a lower extent hexadecadienoic acid (16:2(9Z,12Z)). The sequence is that of Delta(12)-oleate desaturase from Trichosanthes kirilowii (Chinese snake gourd).